A 310-amino-acid polypeptide reads, in one-letter code: Fatty acid elongase 1 (310 aa).

The Lumenal portion of the chain corresponds to 1–63 (MVSDWKNFCL…VGKQPLSEPR (63 aa)). A helical transmembrane segment spans residues 64–84 (PVLLFIAMYYVVIFGGRSLVK). The Cytoplasmic segment spans residues 85-100 (SCKPLKLRFISQVHNL). A helical membrane pass occupies residues 101–121 (MLTSVSFLWLILMVEQMLPIV). The Lumenal segment spans residues 122-141 (YRHGLYFAVCNVESWTQPME). The chain crosses the membrane as a helical span at residues 142-163 (TLYYLNYMTKFVEFADTVLMVL). Residues 164–174 (KHRKLTFLHTY) lie on the Cytoplasmic side of the membrane. The HxxHH motif motif lies at 172–176 (HTYHH). A helical transmembrane segment spans residues 175-196 (HHGATALLCYNQLVGYTAVTWV). At 197-201 (PVTLN) the chain is on the lumenal side. A helical transmembrane segment spans residues 202–223 (LAVHVLMYWYYFLSASGIRVWW). Residues 224-234 (KAWVTRLQIVQ) lie on the Cytoplasmic side of the membrane. Residues 235-255 (FMLDLIVVYYVLYQKIVAAYF) form a helical membrane-spanning segment. At 256 to 271 (KNACTPQCEDCLGSMT) the chain is on the lumenal side. The chain crosses the membrane as a helical span at residues 272–292 (AIAAGAAILTSYLFLFISFYI). Topologically, residues 293–310 (EVYKRGSASGKKKINKNN) are cytoplasmic. The short motif at 304 to 307 (KKIN) is the Di-lysine motif element.

Belongs to the ELO family.

It localises to the endoplasmic reticulum membrane. It carries out the reaction a very-long-chain acyl-CoA + malonyl-CoA + H(+) = a very-long-chain 3-oxoacyl-CoA + CO2 + CoA. The enzyme catalyses tetradecanoyl-CoA + malonyl-CoA + H(+) = 3-oxohexadecanoyl-CoA + CO2 + CoA. The catalysed reaction is (9Z)-tetradecenoyl-CoA + malonyl-CoA + H(+) = 3-oxo-(11Z)-hexadecenoyl-CoA + CO2 + CoA. Functionally, component of a microsomal membrane bound medium-chain fatty acid elongation system, which extends medium-chain-length fatty acids to long-chain fatty acids. Component of elongase I, which extends 12-16-carbon fatty acyl-CoAs such as lauroyl-CoA to 14-18-carbon fatty acids by incorporation of malonyl-CoA. In Saccharomyces cerevisiae (strain ATCC 204508 / S288c) (Baker's yeast), this protein is Fatty acid elongase 1.